We begin with the raw amino-acid sequence, 166 residues long: UBA-like domain-containing protein 2-A (166 aa).

Positions 120 to 166 (QQPVWLPPASPTTHLHHHHHHPQPVWPPNSQPTGGPQKAMAAMDGQR) are disordered.

It belongs to the UBALD family.

The polypeptide is UBA-like domain-containing protein 2-A (ubald2-a) (Xenopus laevis (African clawed frog)).